The following is a 511-amino-acid chain: Maturase K (511 aa).

Belongs to the intron maturase 2 family. MatK subfamily.

It localises to the plastid. The protein resides in the chloroplast. In terms of biological role, usually encoded in the trnK tRNA gene intron. Probably assists in splicing its own and other chloroplast group II introns. This is Maturase K from Hordeum murinum subsp. leporinum (Mouse barley).